Consider the following 178-residue polypeptide: Ribosome maturation factor RimP (178 aa).

The protein belongs to the RimP family.

The protein localises to the cytoplasm. Functionally, required for maturation of 30S ribosomal subunits. The chain is Ribosome maturation factor RimP from Caulobacter vibrioides (strain ATCC 19089 / CIP 103742 / CB 15) (Caulobacter crescentus).